The following is a 378-amino-acid chain: Putative protein YbfL (378 aa).

This sequence belongs to the transposase 11 family.

This Escherichia coli (strain K12) protein is Putative protein YbfL (ybfL).